The following is a 263-amino-acid chain: Small ribosomal subunit protein eS4, Y isoform 2 (263 aa).

One can recognise an S4 RNA-binding domain in the interval 42–104 (LPLIVFLRNR…TGEHFRLVYD (63 aa)).

This sequence belongs to the eukaryotic ribosomal protein eS4 family.

In Pan troglodytes (Chimpanzee), this protein is Small ribosomal subunit protein eS4, Y isoform 2 (RPS4Y2).